Consider the following 550-residue polypeptide: Probable acyl-activating enzyme 6 (550 aa).

Belongs to the ATP-dependent AMP-binding enzyme family. As to expression, expressed at low levels in roots, leaves, stems and developing seeds.

Functionally, may act as an acid--thiol ligase that activates carboxylic acids by forming acyl-CoAs. In Arabidopsis thaliana (Mouse-ear cress), this protein is Probable acyl-activating enzyme 6 (AAE6).